We begin with the raw amino-acid sequence, 154 residues long: SsrA-binding protein (154 aa).

The segment at 126–154 (GKKKYDKREDMKKKEAQREVERAFRERQK) is disordered. Positions 131–154 (DKREDMKKKEAQREVERAFRERQK) are enriched in basic and acidic residues.

The protein belongs to the SmpB family.

The protein resides in the cytoplasm. Required for rescue of stalled ribosomes mediated by trans-translation. Binds to transfer-messenger RNA (tmRNA), required for stable association of tmRNA with ribosomes. tmRNA and SmpB together mimic tRNA shape, replacing the anticodon stem-loop with SmpB. tmRNA is encoded by the ssrA gene; the 2 termini fold to resemble tRNA(Ala) and it encodes a 'tag peptide', a short internal open reading frame. During trans-translation Ala-aminoacylated tmRNA acts like a tRNA, entering the A-site of stalled ribosomes, displacing the stalled mRNA. The ribosome then switches to translate the ORF on the tmRNA; the nascent peptide is terminated with the 'tag peptide' encoded by the tmRNA and targeted for degradation. The ribosome is freed to recommence translation, which seems to be the essential function of trans-translation. In Anoxybacillus flavithermus (strain DSM 21510 / WK1), this protein is SsrA-binding protein.